The chain runs to 591 residues: ATPase family AAA domain-containing protein 3A (591 aa).

The tract at residues 1–52 (MSWLFGIKGPKGEGTGPPLPLPPAQPGAESGGDRGAGDRPSPKDKWSNFDPT) is disordered. An N-acetylserine modification is found at Ser-2. The required for interaction with the inner surface of the mitochondrial outer membrane stretch occupies residues 2–49 (SWLFGIKGPKGEGTGPPLPLPPAQPGAESGGDRGAGDRPSPKDKWSNF). The Mitochondrial intermembrane portion of the chain corresponds to 2–245 (SWLFGIKGPK…FRAFVTDWDK (244 aa)). The segment covering 31 to 47 (GGDRGAGDRPSPKDKWS) has biased composition (basic and acidic residues). A coiled-coil region spans residues 55-216 (ERAAKAAREL…REQIRLKAAE (162 aa)). Residues 246–263 (VTATVAGLTLLAVGVYSA) form a helical membrane-spanning segment. At 264 to 591 (KNATSVAGRY…KPPHPSLLSC (328 aa)) the chain is on the mitochondrial matrix side. The segment at 289–304 (RISVLEALRHPIQVSR) is S100B-binding. ATP is bound at residue 351-358 (GPPGTGKT). At Lys-490 the chain carries N6-acetyllysine; alternate. The residue at position 490 (Lys-490) is an N6-succinyllysine; alternate. 2 positions are modified to N6-acetyllysine: Lys-494 and Lys-512.

It belongs to the AAA ATPase family. As to quaternary structure, can form homooligomers. Homodimer formation at the N-terminus may be regulated by ATP and is required for the interaction with the inner surface of the mitochondrial outer membrane and correct mitochondrial homeostasis. Interacts with components of the mitochondrial ribosome and with other proteins involved in mitochondrial RNA metabolism. May also interact with protein involved in lipid metabolism, including STARD9. May interact with FAM210A. Interacts with GADD45GIP1. Interacts with S100B in a Ca(+2)- and Zn(+2)-dependent manner; this interaction probably occurs in the cytosol prior to mitochondrial targeting. S100B could assist ATAD3A cytoplasmic processing, preventing aggregation and favoring mitochondrial localization. Interacts with HSP60/HSPD1. Interacts with CLPB. Interacts with EIF2AK3/PERK; ATAD3A and EIF2S1/eIF-2-alpha occupy a common binding site within the cytoplasmic loop of EIF2AK3/PERK, leading to prevent EIF2AK3/PERK association with its substrate EIF2S1/eIF-2-alpha.

It localises to the mitochondrion inner membrane. Its subcellular location is the mitochondrion matrix. It is found in the mitochondrion nucleoid. It carries out the reaction ATP + H2O = ADP + phosphate + H(+). Its function is as follows. Essential for mitochondrial network organization, mitochondrial metabolism and cell growth at organism and cellular level. May play an important role in mitochondrial protein synthesis. May also participate in mitochondrial DNA replication. May bind to mitochondrial DNA D-loops and contribute to nucleoid stability. Required for enhanced channeling of cholesterol for hormone-dependent steroidogenesis. Involved in mitochondrial-mediated antiviral innate immunity. Required to protect mitochondria from the PERK-mediated unfolded protein response: specifically inhibits the activity of EIF2AK3/PERK at mitochondria-endoplasmic reticulum contact sites, thereby providing a safe haven for mitochondrial protein translation during endoplasmic reticulum stress. Ability to inhibit EIF2AK3/PERK is independent of its ATPase activity. Also involved in the mitochondrial DNA damage response by promoting signaling between damaged genomes and the mitochondrial membrane, leading to activation of the integrated stress response (ISR). The sequence is that of ATPase family AAA domain-containing protein 3A (Atad3a) from Rattus norvegicus (Rat).